A 1225-amino-acid chain; its full sequence is Clustered mitochondria protein homolog (1225 aa).

Residues 1 to 22 (MAQTNGEMEHSKESPEQITNGN) are disordered. Positions 281 to 532 (QESNNQKDLL…RVTPLDVAWN (252 aa)) constitute a Clu domain. Disordered stretches follow at residues 577 to 605 (EEAAKKEKSSEDTESKEEGSEEKSEEALD) and 846 to 878 (ANGVNGTGQDEGSKKKKKNKNGDSGSPARSAAA). TPR repeat units lie at residues 949–982 (AKLYHQLSMLYYQTDEKDAAVELARKAVIVTERT), 991–1024 (ILSYLNLSLFEHASGNTKVALAYIKHAMDLWKII), and 1033–1066 (ITTMNNAAVMLQHLKQYSDSRKWFEASLSVCESL). Residues 1153–1184 (RTTLGTQIQPQVGQSTADVSAPSQASNSSIDS) show a composition bias toward polar residues. The tract at residues 1153 to 1225 (RTTLGTQIQP…KLRGSKKSSA (73 aa)) is disordered.

This sequence belongs to the CLU family. In terms of assembly, may associate with the eukaryotic translation initiation factor 3 (eIF-3) complex.

Its subcellular location is the cytoplasm. In terms of biological role, mRNA-binding protein involved in proper cytoplasmic distribution of mitochondria. This Emericella nidulans (strain FGSC A4 / ATCC 38163 / CBS 112.46 / NRRL 194 / M139) (Aspergillus nidulans) protein is Clustered mitochondria protein homolog.